We begin with the raw amino-acid sequence, 538 residues long: Pentatricopeptide repeat-containing protein At1g33350 (538 aa).

PPR repeat units lie at residues 87–123 (NTHL…SVPR), 125–159 (NHFI…GFHL), 160–191 (YVVV…MSER), 192–226 (NVVS…DVPS), 227–253 (WNAI…MINE), 259–293 (NEVT…DLSS), 294–324 (DVFV…ASKK), 325–359 (SLTA…NIND), 363–398 (DHIT…GIEP), and 399–433 (RIEH…ADEA). Positions 434–509 (IWGSLLNACK…PPGWSRIEID (76 aa)) are type E motif.

Belongs to the PPR family. PCMP-E subfamily.

The polypeptide is Pentatricopeptide repeat-containing protein At1g33350 (PCMP-E57) (Arabidopsis thaliana (Mouse-ear cress)).